The sequence spans 120 residues: MIVATLTPLWPLLDAEERPAVVSEVARSVTRSIALAPFHIRFAVESVSIVIGLCTVLISAGAGGPLARTLRTDRFYRLLQRMPGPAGSVIRLYRSMTLLAFYDEAPVAEKLLAARPAQTS.

The helical transmembrane segment at Val47 to Gly63 threads the bilayer.

The protein localises to the membrane. This is an uncharacterized protein from Sinorhizobium fredii (strain NBRC 101917 / NGR234).